Consider the following 358-residue polypeptide: ATP synthase gamma chain, chloroplastic (358 aa).

The N-terminal 35 residues, 1-35 (MAAMLASKQGAFMGRSSFAPAPKGVASRGSLQVVA), are a transit peptide targeting the chloroplast. Residue Cys123 is part of the active site. A disulfide bond links Cys233 and Cys239.

Belongs to the ATPase gamma chain family. As to quaternary structure, F-type ATPases have 2 components, F(1) - the catalytic core - and F(0) - the membrane proton channel. F(1) has five subunits: alpha(3), beta(3), gamma(1), delta(1), epsilon(1). F(0) has four main subunits: a(1), b(1), b'(1) and c(10-14). The alpha and beta chains form an alternating ring which encloses part of the gamma chain. F(1) is attached to F(0) by a central stalk formed by the gamma and epsilon chains, while a peripheral stalk is formed by the delta, b and b' chains.

Its subcellular location is the plastid. It is found in the chloroplast thylakoid membrane. In terms of biological role, f(1)F(0) ATP synthase produces ATP from ADP in the presence of a proton or sodium gradient. F-type ATPases consist of two structural domains, F(1) containing the extramembraneous catalytic core and F(0) containing the membrane proton channel, linked together by a central stalk and a peripheral stalk. During catalysis, ATP synthesis in the catalytic domain of F(1) is coupled via a rotary mechanism of the central stalk subunits to proton translocation. Produces ATP from ADP in the presence of a proton gradient across the membrane. The gamma chain is believed to be important in regulating ATPase activity and the flow of protons through the CF(0) complex. This Chlamydomonas reinhardtii (Chlamydomonas smithii) protein is ATP synthase gamma chain, chloroplastic.